Consider the following 507-residue polypeptide: Glutamyl-tRNA(Gln) amidotransferase subunit A, mitochondrial (507 aa).

Residues lysine 79 and serine 160 each act as charge relay system in the active site. Serine 184 functions as the Acyl-ester intermediate in the catalytic mechanism.

Belongs to the amidase family. GatA subfamily. As to quaternary structure, subunit of the heterotrimeric GatCAB amidotransferase (AdT) complex, composed of A, B and C subunits.

The protein resides in the mitochondrion. It carries out the reaction L-glutamyl-tRNA(Gln) + L-glutamine + ATP + H2O = L-glutaminyl-tRNA(Gln) + L-glutamate + ADP + phosphate + H(+). In terms of biological role, allows the formation of correctly charged Gln-tRNA(Gln) through the transamidation of misacylated Glu-tRNA(Gln) in the mitochondria. The reaction takes place in the presence of glutamine and ATP through an activated gamma-phospho-Glu-tRNA(Gln). In Drosophila pseudoobscura pseudoobscura (Fruit fly), this protein is Glutamyl-tRNA(Gln) amidotransferase subunit A, mitochondrial.